The primary structure comprises 303 residues: mRNA-capping enzyme subunit beta (303 aa).

It belongs to the fungal TPase family. In terms of assembly, heterodimer. The mRNA-capping enzyme is composed of two separate chains alpha and beta, respectively a mRNA guanylyltransferase and an mRNA 5'-triphosphate monophosphatase. Requires Mg(2+) as cofactor.

It is found in the nucleus. It catalyses the reaction a 5'-end triphospho-ribonucleoside in mRNA + H2O = a 5'-end diphospho-ribonucleoside in mRNA + phosphate + H(+). Functionally, first step of mRNA capping. Converts the 5'-triphosphate end of a nascent mRNA chain into a diphosphate end. In Schizosaccharomyces pombe (strain 972 / ATCC 24843) (Fission yeast), this protein is mRNA-capping enzyme subunit beta (pct1).